Reading from the N-terminus, the 128-residue chain is Large ribosomal subunit protein bL12 (128 aa).

Belongs to the bacterial ribosomal protein bL12 family. Homodimer. Part of the ribosomal stalk of the 50S ribosomal subunit. Forms a multimeric L10(L12)X complex, where L10 forms an elongated spine to which 2 to 4 L12 dimers bind in a sequential fashion. Binds GTP-bound translation factors.

Its function is as follows. Forms part of the ribosomal stalk which helps the ribosome interact with GTP-bound translation factors. Is thus essential for accurate translation. The sequence is that of Large ribosomal subunit protein bL12 from Petrotoga mobilis (strain DSM 10674 / SJ95).